We begin with the raw amino-acid sequence, 307 residues long: uncharacterized protein (307 aa).

The interval 254–278 (HSRHHRRHHRRHHHHHHQNSSHSDE) is disordered. Positions 255 to 272 (SRHHRRHHRRHHHHHHQN) are enriched in basic residues.

The protein to yeast YOR062c.

This is an uncharacterized protein from Saccharomyces cerevisiae (strain ATCC 204508 / S288c) (Baker's yeast).